Reading from the N-terminus, the 406-residue chain is Tryptophan synthase beta chain (406 aa).

K99 is subject to N6-(pyridoxal phosphate)lysine.

This sequence belongs to the TrpB family. As to quaternary structure, tetramer of two alpha and two beta chains. It depends on pyridoxal 5'-phosphate as a cofactor.

It catalyses the reaction (1S,2R)-1-C-(indol-3-yl)glycerol 3-phosphate + L-serine = D-glyceraldehyde 3-phosphate + L-tryptophan + H2O. It participates in amino-acid biosynthesis; L-tryptophan biosynthesis; L-tryptophan from chorismate: step 5/5. Functionally, the beta subunit is responsible for the synthesis of L-tryptophan from indole and L-serine. The chain is Tryptophan synthase beta chain from Sinorhizobium fredii (strain NBRC 101917 / NGR234).